The sequence spans 678 residues: NADPH--cytochrome P450 reductase (678 aa).

G2 bears the N-acetylglycine mark. Topologically, residues 2-22 (GDSHEDTSATVPEAVAEEVSL) are lumenal. A helical membrane pass occupies residues 23 to 43 (FSTTDIVLFSLIVGVLTYWFI). Topologically, residues 44–678 (FKKKKEEIPE…KGRYSLDVWS (635 aa)) are cytoplasmic. Positions 80 to 224 (IIVFYGSQTG…DFITWREQFW (145 aa)) constitute a Flavodoxin-like domain. FMN contacts are provided by residues 86–91 (SQTGTA), 138–141 (ATYG), 173–182 (LGNKTYEHFN), and D208. In terms of domain architecture, FAD-binding FR-type spans 279–521 (KNPFLAAVTT…FVRKSQFRLP (243 aa)). Residue R298 participates in NADP(+) binding. FAD-binding positions include R424, 454–457 (RYYS), 472–474 (CAV), Y478, and 488–491 (GVAT). Residues T535, 596-597 (SR), 602-606 (KVYVQ), and D639 contribute to the NADP(+) site. Residue W677 coordinates FAD.

The protein belongs to the NADPH--cytochrome P450 reductase family. It in the N-terminal section; belongs to the flavodoxin family. This sequence in the C-terminal section; belongs to the flavoprotein pyridine nucleotide cytochrome reductase family. FAD is required as a cofactor. FMN serves as cofactor.

It localises to the endoplasmic reticulum membrane. The catalysed reaction is 2 oxidized [cytochrome P450] + NADPH = 2 reduced [cytochrome P450] + NADP(+) + H(+). In terms of biological role, this enzyme is required for electron transfer from NADP to cytochrome P450 in microsomes. It can also provide electron transfer to heme oxygenase and cytochrome B5. The protein is NADPH--cytochrome P450 reductase of Mus musculus (Mouse).